Here is a 187-residue protein sequence, read N- to C-terminus: UPF0301 protein VS_2679 (187 aa).

The protein belongs to the UPF0301 (AlgH) family.

The protein is UPF0301 protein VS_2679 of Vibrio atlanticus (strain LGP32) (Vibrio splendidus (strain Mel32)).